A 469-amino-acid chain; its full sequence is Phosphoenolpyruvate carboxylase (469 aa).

It belongs to the PEPCase type 2 family. In terms of assembly, homotetramer. Mg(2+) is required as a cofactor.

The enzyme catalyses oxaloacetate + phosphate = phosphoenolpyruvate + hydrogencarbonate. Its function is as follows. Catalyzes the irreversible beta-carboxylation of phosphoenolpyruvate (PEP) to form oxaloacetate (OAA), a four-carbon dicarboxylic acid source for the tricarboxylic acid cycle. The chain is Phosphoenolpyruvate carboxylase from Pyrococcus abyssi (strain GE5 / Orsay).